A 166-amino-acid polypeptide reads, in one-letter code: Interferon gamma (166 aa).

Positions Met-1–Gly-23 are cleaved as a signal peptide. A Pyrrolidone carboxylic acid modification is found at Gln-24. N-linked (GlcNAc...) asparagine glycans are attached at residues Asn-39 and Asn-106.

This sequence belongs to the type II (or gamma) interferon family. Homodimer. Interacts with IFNGR1 (via extracellular domain); this interaction promotes IFNGR1 dimerization. In terms of tissue distribution, released primarily from activated T lymphocytes.

The protein resides in the secreted. In terms of biological role, type II interferon produced by immune cells such as T-cells and NK cells that plays crucial roles in antimicrobial, antiviral, and antitumor responses by activating effector immune cells and enhancing antigen presentation. Primarily signals through the JAK-STAT pathway after interaction with its receptor IFNGR1 to affect gene regulation. Upon IFNG binding, IFNGR1 intracellular domain opens out to allow association of downstream signaling components JAK2, JAK1 and STAT1, leading to STAT1 activation, nuclear translocation and transcription of IFNG-regulated genes. Many of the induced genes are transcription factors such as IRF1 that are able to further drive regulation of a next wave of transcription. Plays a role in class I antigen presentation pathway by inducing a replacement of catalytic proteasome subunits with immunoproteasome subunits. In turn, increases the quantity, quality, and repertoire of peptides for class I MHC loading. Increases the efficiency of peptide generation also by inducing the expression of activator PA28 that associates with the proteasome and alters its proteolytic cleavage preference. Up-regulates as well MHC II complexes on the cell surface by promoting expression of several key molecules such as cathepsins B/CTSB, H/CTSH, and L/CTSL. Participates in the regulation of hematopoietic stem cells during development and under homeostatic conditions by affecting their development, quiescence, and differentiation. The protein is Interferon gamma (IFNG) of Bos indicus (Zebu).